The sequence spans 509 residues: Diacylglycerol kinase 5 (509 aa).

One can recognise a DAGKc domain in the interval 36–187 (TPASPVLVFI…IDNWHILMRM (152 aa)). The segment covering 439–452 (RSVFDPSTPRHQDG) has biased composition (basic and acidic residues). The tract at residues 439–509 (RSVFDPSTPR…SNVHGWSHVL (71 aa)) is disordered. Residues 453–467 (AEDYDDNEDDSVAEG) are compositionally biased toward acidic residues. Residues 468–489 (EEFRKFGAADTFKIPDEGEHSN) are compositionally biased toward basic and acidic residues. Positions 490–500 (KKGRASRRRNS) are enriched in basic residues.

This sequence belongs to the eukaryotic diacylglycerol kinase family. Monomer.

The enzyme catalyses a 1,2-diacyl-sn-glycerol + ATP = a 1,2-diacyl-sn-glycero-3-phosphate + ADP + H(+). In terms of biological role, phosphorylates the second messenger diacylglycerol (DAG) to generate phosphatidic acid (PA), another important signaling molecule. PA is required for plant development and responses to abiotic stress and pathogen attack. May be involved in the accumulation of PA during cold stress. This is Diacylglycerol kinase 5 (DGK5) from Arabidopsis thaliana (Mouse-ear cress).